A 220-amino-acid chain; its full sequence is UPF0319 protein YccT (220 aa).

The signal sequence occupies residues 1–20 (MKTGIVTTLIALCLPVSVFA).

It belongs to the UPF0319 family.

This is UPF0319 protein YccT from Shigella flexneri serotype 5b (strain 8401).